Consider the following 194-residue polypeptide: Isopentenyl-diphosphate Delta-isomerase (194 aa).

The Mn(2+) site is built by histidine 23 and histidine 30. The 135-residue stretch at 28–162 (PLHLAFSCYV…TTDISPWCRQ (135 aa)) folds into the Nudix hydrolase domain. Residue cysteine 65 is part of the active site. Mn(2+) is bound at residue histidine 67. Glutamate 85 is a Mg(2+) binding site. Mn(2+) is bound by residues glutamate 112 and glutamate 114. Glutamate 114 is a catalytic residue.

Belongs to the IPP isomerase type 1 family. Mg(2+) serves as cofactor. It depends on Mn(2+) as a cofactor.

The protein localises to the cytoplasm. The catalysed reaction is isopentenyl diphosphate = dimethylallyl diphosphate. It functions in the pathway isoprenoid biosynthesis; dimethylallyl diphosphate biosynthesis; dimethylallyl diphosphate from isopentenyl diphosphate: step 1/1. Its function is as follows. Catalyzes the 1,3-allylic rearrangement of the homoallylic substrate isopentenyl (IPP) to its highly electrophilic allylic isomer, dimethylallyl diphosphate (DMAPP). The sequence is that of Isopentenyl-diphosphate Delta-isomerase from Saccharopolyspora erythraea (strain ATCC 11635 / DSM 40517 / JCM 4748 / NBRC 13426 / NCIMB 8594 / NRRL 2338).